The primary structure comprises 152 residues: Ubiquitin-conjugating enzyme E2 N (152 aa).

Residues 3–149 enclose the UBC core domain; that stretch reads GLPRRIIKET…ARAWTRLYAM (147 aa). Lys82 is subject to N6-acetyllysine. Catalysis depends on Cys87, which acts as the Glycyl thioester intermediate. Lys92 participates in a covalent cross-link: Glycyl lysine isopeptide (Lys-Gly) (interchain with G-Cter in ISG15). The residue at position 131 (Ser131) is a Phosphoserine.

It belongs to the ubiquitin-conjugating enzyme family. As to quaternary structure, heterodimer with UBE2V2. Interacts (UBE2V2-UBE2N heterodimer) with the E3 ligase STUB1 (via the U-box domain); the complex has a specific 'Lys-63'-linked polyubiquitination activity. Interacts with RNF8 and RNF168. Interacts with RNF11. Interacts with the E3 ligases, HLTF and SHPRH; the interactions promote the 'Lys-63'-linked polyubiquitination of PCNA upon genotoxic stress and lead to DNA repair. Interacts with ARIH2 (via RING-type 2). Interacts with OTUB1; leading to inhibit E2-conjugating activity. Interacts with GPS2; leading to inhibit E2-conjugating activity. Interacts with RIGI and RNF135; involved in RIGI ubiquitination and activation. Post-translationally, conjugation to ISG15 impairs formation of the thioester bond with ubiquitin but not interaction with UBE2V2.

The enzyme catalyses S-ubiquitinyl-[E1 ubiquitin-activating enzyme]-L-cysteine + [E2 ubiquitin-conjugating enzyme]-L-cysteine = [E1 ubiquitin-activating enzyme]-L-cysteine + S-ubiquitinyl-[E2 ubiquitin-conjugating enzyme]-L-cysteine.. The protein operates within protein modification; protein ubiquitination. With respect to regulation, activity is inhibited by binding to OTUB1, which prevents 'Lys-63'-linked polyubiquitination. Activity is inhibited by GPS2, leading to prevent 'Lys-63'-linked polyubiquitination. In terms of biological role, the UBE2V1-UBE2N and UBE2V2-UBE2N heterodimers catalyze the synthesis of non-canonical 'Lys-63'-linked polyubiquitin chains. This type of polyubiquitination does not lead to protein degradation by the proteasome. Mediates transcriptional activation of target genes. Plays a role in the control of progress through the cell cycle and differentiation. Plays a role in the error-free DNA repair pathway and contributes to the survival of cells after DNA damage. Acts together with the E3 ligases, HLTF and SHPRH, in the 'Lys-63'-linked poly-ubiquitination of PCNA upon genotoxic stress, which is required for DNA repair. Appears to act together with E3 ligase RNF5 in the 'Lys-63'-linked polyubiquitination of JKAMP thereby regulating JKAMP function by decreasing its association with components of the proteasome and ERAD. Promotes TRIM5 capsid-specific restriction activity and the UBE2V1-UBE2N heterodimer acts in concert with TRIM5 to generate 'Lys-63'-linked polyubiquitin chains which activate the MAP3K7/TAK1 complex which in turn results in the induction and expression of NF-kappa-B and MAPK-responsive inflammatory genes. Together with RNF135 and UB2V1, catalyzes the viral RNA-dependent 'Lys-63'-linked polyubiquitination of RIGI to activate the downstream signaling pathway that leads to interferon beta production. UBE2V1-UBE2N together with TRAF3IP2 E3 ubiquitin ligase mediate 'Lys-63'-linked polyubiquitination of TRAF6, a component of IL17A-mediated signaling pathway. The sequence is that of Ubiquitin-conjugating enzyme E2 N (Ube2n) from Rattus norvegicus (Rat).